We begin with the raw amino-acid sequence, 349 residues long: Flagellar P-ring protein (349 aa).

A signal peptide spans Met1 to Ala20.

It belongs to the FlgI family. In terms of assembly, the basal body constitutes a major portion of the flagellar organelle and consists of four rings (L,P,S, and M) mounted on a central rod.

Its subcellular location is the periplasm. The protein resides in the bacterial flagellum basal body. Functionally, assembles around the rod to form the L-ring and probably protects the motor/basal body from shearing forces during rotation. This Wolinella succinogenes (strain ATCC 29543 / DSM 1740 / CCUG 13145 / JCM 31913 / LMG 7466 / NCTC 11488 / FDC 602W) (Vibrio succinogenes) protein is Flagellar P-ring protein.